Here is a 335-residue protein sequence, read N- to C-terminus: Glycerol-3-phosphate dehydrogenase [NAD(P)+] (335 aa).

3 residues coordinate NADPH: S12, W13, and K107. The sn-glycerol 3-phosphate site is built by K107, G138, and S140. Residue A142 coordinates NADPH. Sn-glycerol 3-phosphate-binding residues include K193, D246, S256, R257, and N258. The active-site Proton acceptor is K193. R257 provides a ligand contact to NADPH. Positions 281 and 283 each coordinate NADPH.

This sequence belongs to the NAD-dependent glycerol-3-phosphate dehydrogenase family.

The protein localises to the cytoplasm. The catalysed reaction is sn-glycerol 3-phosphate + NAD(+) = dihydroxyacetone phosphate + NADH + H(+). The enzyme catalyses sn-glycerol 3-phosphate + NADP(+) = dihydroxyacetone phosphate + NADPH + H(+). It participates in membrane lipid metabolism; glycerophospholipid metabolism. In terms of biological role, catalyzes the reduction of the glycolytic intermediate dihydroxyacetone phosphate (DHAP) to sn-glycerol 3-phosphate (G3P), the key precursor for phospholipid synthesis. The chain is Glycerol-3-phosphate dehydrogenase [NAD(P)+] from Geobacter sulfurreducens (strain ATCC 51573 / DSM 12127 / PCA).